We begin with the raw amino-acid sequence, 30 residues long: Cyclotide mela-5 (30 aa).

Positions 1–30 form a cross-link, cyclopeptide (Gly-Asp); sequence GSAIACGESCFKFKCYTPGCSCSYPICKKD. 3 disulfides stabilise this stretch: cysteine 6–cysteine 20, cysteine 10–cysteine 22, and cysteine 15–cysteine 27.

In terms of processing, this is a cyclic peptide. Contains 3 disulfide bonds.

Its function is as follows. Probably participates in a plant defense mechanism (Potential). Binds to and induces leakage in phospholipd membranes, particularly ones containing 1-palmitoyl-2-oleophosphatidylethanolamine (POPE). This is Cyclotide mela-5 from Melicytus latifolius (Norfolk Island mahoe).